Here is a 268-residue protein sequence, read N- to C-terminus: Lipase (268 aa).

The N-terminal stretch at 1 to 34 (MRLSRRAATASALLLTPALALFGASAAVSAPRIQ) is a signal peptide. Residue Ser44 is the Nucleophile of the active site. Disulfide bonds link Cys61/Cys86, Cys127/Cys135, and Cys185/Cys232. Residue His250 is part of the active site.

Monomer.

The protein localises to the secreted. It carries out the reaction a triacylglycerol + H2O = a diacylglycerol + a fatty acid + H(+). The catalysed reaction is hexadecanoyl-CoA + H2O = hexadecanoate + CoA + H(+). With respect to regulation, inhibited by 3,4-dichloroisocoumarin and tetrahydrolipstatin in the absence of substrate, but by phenylmethylsulfonyl fluoride (PMSF) only in the presence of substrate. Several water-miscible solvents enhance the lipase hydrolytic activity in vitro. Tetrahydrofuran and N,N-dimethylformamide (both 50%) inactivate the enzyme with t1/2 of 5 minutes and t1/2 of 2 hours, respectively. Its function is as follows. Catalyzes the hydrolysis of p-nitrophenyl esters, alpha- and beta-naphthyl esters, and triacylglycerols, with a preference for medium acyl chain length (C8-C12). Shows a much higher hydrolysis rate of glycerol esters of unsaturated C16 and C18 fatty acids than that of their saturated counterparts, and a preference for cis double bond. Is also able to hydrolyze several natural oils and Tween detergents. Also displays thioesterase and phospholipase activities, towards palmitoyl-coenzyme A and diheptanoyl glycerophosphocholine, respectively. Shows transesterification activity of racemic 1-phenyl ethanol with vinyl acetate in hexane, proceeding with partial (R)-enantioselectivity. In Streptomyces rimosus, this protein is Lipase.